The primary structure comprises 293 residues: tRNA-cytidine(32) 2-sulfurtransferase (293 aa).

A PP-loop motif motif is present at residues 62–67; that stretch reads SGGKDS. The [4Fe-4S] cluster site is built by cysteine 137, cysteine 140, and cysteine 228.

Belongs to the TtcA family. As to quaternary structure, homodimer. Requires Mg(2+) as cofactor. [4Fe-4S] cluster is required as a cofactor.

Its subcellular location is the cytoplasm. It catalyses the reaction cytidine(32) in tRNA + S-sulfanyl-L-cysteinyl-[cysteine desulfurase] + AH2 + ATP = 2-thiocytidine(32) in tRNA + L-cysteinyl-[cysteine desulfurase] + A + AMP + diphosphate + H(+). The protein operates within tRNA modification. Its function is as follows. Catalyzes the ATP-dependent 2-thiolation of cytidine in position 32 of tRNA, to form 2-thiocytidine (s(2)C32). The sulfur atoms are provided by the cysteine/cysteine desulfurase (IscS) system. The polypeptide is tRNA-cytidine(32) 2-sulfurtransferase (Brucella suis (strain ATCC 23445 / NCTC 10510)).